Consider the following 386-residue polypeptide: GTPase Obg (386 aa).

The 159-residue stretch at 1 to 159 (MKFVDEAVIR…RSLKLELMLL (159 aa)) folds into the Obg domain. The region spanning 160–333 (ADVGLLGMPN…LSLKLVDFID (174 aa)) is the OBG-type G domain. GTP is bound by residues 166–173 (GMPNAGKS), 191–195 (FTTLV), 213–216 (DIPG), 283–286 (NKKD), and 314–316 (SAY). Mg(2+)-binding residues include serine 173 and threonine 193. Residues 356–375 (KDSDSLNEDFDDSDDDDFDD) form a disordered region. Residues 360-375 (SLNEDFDDSDDDDFDD) show a composition bias toward acidic residues.

Belongs to the TRAFAC class OBG-HflX-like GTPase superfamily. OBG GTPase family. Monomer. Mg(2+) is required as a cofactor.

Its subcellular location is the cytoplasm. In terms of biological role, an essential GTPase which binds GTP, GDP and possibly (p)ppGpp with moderate affinity, with high nucleotide exchange rates and a fairly low GTP hydrolysis rate. Plays a role in control of the cell cycle, stress response, ribosome biogenesis and in those bacteria that undergo differentiation, in morphogenesis control. This is GTPase Obg from Shewanella sediminis (strain HAW-EB3).